The chain runs to 211 residues: tRNA (guanine-N(7)-)-methyltransferase (211 aa).

Residues E44, D69, D96, and D118 each coordinate S-adenosyl-L-methionine. D118 is a catalytic residue. Position 122 (K122) interacts with substrate. The segment at 124–129 (RHEKRR) is interaction with RNA. Residues D154 and 191–194 (TEYE) each bind substrate.

It belongs to the class I-like SAM-binding methyltransferase superfamily. TrmB family.

The catalysed reaction is guanosine(46) in tRNA + S-adenosyl-L-methionine = N(7)-methylguanosine(46) in tRNA + S-adenosyl-L-homocysteine. It functions in the pathway tRNA modification; N(7)-methylguanine-tRNA biosynthesis. Catalyzes the formation of N(7)-methylguanine at position 46 (m7G46) in tRNA. This is tRNA (guanine-N(7)-)-methyltransferase from Streptococcus equi subsp. zooepidemicus (strain H70).